A 380-amino-acid polypeptide reads, in one-letter code: 4-hydroxy-tetrahydrodipicolinate synthase, chloroplastic (380 aa).

A disordered region spans residues 1 to 44; it reads MISPTNLLPARKITPVSNGGAATASPSSPSVAARPRRLPSGLQS. A chloroplast-targeting transit peptide spans 1–54; sequence MISPTNLLPARKITPVSNGGAATASPSSPSVAARPRRLPSGLQSVTGRGKVSLA. Positions 21 to 33 are enriched in low complexity; it reads AATASPSSPSVAA. T123 lines the pyruvate pocket. Residue Y209 is the Proton donor/acceptor of the active site. The active-site Schiff-base intermediate with substrate is K237. I276 lines the pyruvate pocket.

It belongs to the DapA family. Tetramer of modified subunits derived from two genes in different combinations.

It is found in the plastid. The protein resides in the chloroplast. The enzyme catalyses L-aspartate 4-semialdehyde + pyruvate = (2S,4S)-4-hydroxy-2,3,4,5-tetrahydrodipicolinate + H2O + H(+). It functions in the pathway amino-acid biosynthesis; L-lysine biosynthesis via DAP pathway; (S)-tetrahydrodipicolinate from L-aspartate: step 3/4. Sensitive to lysine inhibition. This inhibition increase in an allosteric manner with increasing concentration of the inhibitor. Functionally, catalyzes the condensation of (S)-aspartate-beta-semialdehyde [(S)-ASA] and pyruvate to 4-hydroxy-tetrahydrodipicolinate (HTPA). The chain is 4-hydroxy-tetrahydrodipicolinate synthase, chloroplastic from Zea mays (Maize).